Reading from the N-terminus, the 287-residue chain is 4-hydroxybenzoate octaprenyltransferase (287 aa).

The next 6 helical transmembrane spans lie at 41–61 (LPLL…GCAI), 92–112 (VALA…LNAL), 133–153 (FFAI…PMAF), 160–180 (VPML…AYDT), 218–238 (LGIY…WLGW), and 267–287 (NNWL…ATWF).

The protein belongs to the UbiA prenyltransferase family. It depends on Mg(2+) as a cofactor.

The protein resides in the cell inner membrane. It carries out the reaction all-trans-octaprenyl diphosphate + 4-hydroxybenzoate = 4-hydroxy-3-(all-trans-octaprenyl)benzoate + diphosphate. It participates in cofactor biosynthesis; ubiquinone biosynthesis. In terms of biological role, catalyzes the prenylation of para-hydroxybenzoate (PHB) with an all-trans polyprenyl group. Mediates the second step in the final reaction sequence of ubiquinone-8 (UQ-8) biosynthesis, which is the condensation of the polyisoprenoid side chain with PHB, generating the first membrane-bound Q intermediate 3-octaprenyl-4-hydroxybenzoate. This Paraburkholderia xenovorans (strain LB400) protein is 4-hydroxybenzoate octaprenyltransferase.